We begin with the raw amino-acid sequence, 434 residues long: Glutamate-1-semialdehyde 2,1-aminomutase 2 (434 aa).

Lys270 bears the N6-(pyridoxal phosphate)lysine mark.

The protein belongs to the class-III pyridoxal-phosphate-dependent aminotransferase family. HemL subfamily. As to quaternary structure, homodimer. It depends on pyridoxal 5'-phosphate as a cofactor.

The protein localises to the cytoplasm. The catalysed reaction is (S)-4-amino-5-oxopentanoate = 5-aminolevulinate. Its pathway is porphyrin-containing compound metabolism; protoporphyrin-IX biosynthesis; 5-aminolevulinate from L-glutamyl-tRNA(Glu): step 2/2. In Bacillus cereus (strain G9842), this protein is Glutamate-1-semialdehyde 2,1-aminomutase 2.